Reading from the N-terminus, the 227-residue chain is 2-C-methyl-D-erythritol 4-phosphate cytidylyltransferase (227 aa).

Belongs to the IspD/TarI cytidylyltransferase family. IspD subfamily.

The enzyme catalyses 2-C-methyl-D-erythritol 4-phosphate + CTP + H(+) = 4-CDP-2-C-methyl-D-erythritol + diphosphate. The protein operates within isoprenoid biosynthesis; isopentenyl diphosphate biosynthesis via DXP pathway; isopentenyl diphosphate from 1-deoxy-D-xylulose 5-phosphate: step 2/6. Its function is as follows. Catalyzes the formation of 4-diphosphocytidyl-2-C-methyl-D-erythritol from CTP and 2-C-methyl-D-erythritol 4-phosphate (MEP). The sequence is that of 2-C-methyl-D-erythritol 4-phosphate cytidylyltransferase from Bordetella parapertussis (strain 12822 / ATCC BAA-587 / NCTC 13253).